The primary structure comprises 325 residues: Replication factor C small subunit (325 aa).

ATP is bound at residue 54 to 61 (GPAGTGKT).

Belongs to the activator 1 small subunits family. RfcS subfamily. Heteromultimer composed of small subunits (RfcS) and large subunits (RfcL).

Its function is as follows. Part of the RFC clamp loader complex which loads the PCNA sliding clamp onto DNA. This Haloarcula marismortui (strain ATCC 43049 / DSM 3752 / JCM 8966 / VKM B-1809) (Halobacterium marismortui) protein is Replication factor C small subunit.